The sequence spans 237 residues: Large ribosomal subunit protein uL1 (237 aa).

This sequence belongs to the universal ribosomal protein uL1 family. In terms of assembly, part of the 50S ribosomal subunit.

Binds directly to 23S rRNA. The L1 stalk is quite mobile in the ribosome, and is involved in E site tRNA release. In terms of biological role, protein L1 is also a translational repressor protein, it controls the translation of the L11 operon by binding to its mRNA. This chain is Large ribosomal subunit protein uL1, found in Chloroflexus aggregans (strain MD-66 / DSM 9485).